Consider the following 292-residue polypeptide: Glycine--tRNA ligase alpha subunit (292 aa).

It belongs to the class-II aminoacyl-tRNA synthetase family. As to quaternary structure, tetramer of two alpha and two beta subunits.

Its subcellular location is the cytoplasm. The enzyme catalyses tRNA(Gly) + glycine + ATP = glycyl-tRNA(Gly) + AMP + diphosphate. In Geobacter sulfurreducens (strain ATCC 51573 / DSM 12127 / PCA), this protein is Glycine--tRNA ligase alpha subunit.